Consider the following 462-residue polypeptide: Glycine--tRNA ligase (462 aa).

Positions 100 and 174 each coordinate substrate. ATP contacts are provided by residues arginine 206–glutamate 208, phenylalanine 216–phenylalanine 221, glutamate 290–leucine 291, and glycine 334–arginine 337. Phenylalanine 221 to glutamate 225 lines the substrate pocket. Glutamate 330–glycine 334 provides a ligand contact to substrate.

It belongs to the class-II aminoacyl-tRNA synthetase family. In terms of assembly, homodimer.

The protein localises to the cytoplasm. It catalyses the reaction tRNA(Gly) + glycine + ATP = glycyl-tRNA(Gly) + AMP + diphosphate. Functionally, catalyzes the attachment of glycine to tRNA(Gly). The protein is Glycine--tRNA ligase of Alkaliphilus oremlandii (strain OhILAs) (Clostridium oremlandii (strain OhILAs)).